The chain runs to 321 residues: Lipoyl synthase (321 aa).

Residues Cys68, Cys73, Cys79, Cys94, Cys98, Cys101, and Ser308 each contribute to the [4Fe-4S] cluster site. Residues 80–297 (FNHGTATFMI…KEVALELGFT (218 aa)) form the Radical SAM core domain.

Belongs to the radical SAM superfamily. Lipoyl synthase family. The cofactor is [4Fe-4S] cluster.

Its subcellular location is the cytoplasm. The catalysed reaction is [[Fe-S] cluster scaffold protein carrying a second [4Fe-4S](2+) cluster] + N(6)-octanoyl-L-lysyl-[protein] + 2 oxidized [2Fe-2S]-[ferredoxin] + 2 S-adenosyl-L-methionine + 4 H(+) = [[Fe-S] cluster scaffold protein] + N(6)-[(R)-dihydrolipoyl]-L-lysyl-[protein] + 4 Fe(3+) + 2 hydrogen sulfide + 2 5'-deoxyadenosine + 2 L-methionine + 2 reduced [2Fe-2S]-[ferredoxin]. It functions in the pathway protein modification; protein lipoylation via endogenous pathway; protein N(6)-(lipoyl)lysine from octanoyl-[acyl-carrier-protein]: step 2/2. In terms of biological role, catalyzes the radical-mediated insertion of two sulfur atoms into the C-6 and C-8 positions of the octanoyl moiety bound to the lipoyl domains of lipoate-dependent enzymes, thereby converting the octanoylated domains into lipoylated derivatives. This Vibrio parahaemolyticus serotype O3:K6 (strain RIMD 2210633) protein is Lipoyl synthase.